A 297-amino-acid polypeptide reads, in one-letter code: HTH-type transcriptional regulator ArgP (297 aa).

One can recognise an HTH lysR-type domain in the interval 4–60 (PDYRTLQALDAVIRERGFERAAQKLCITQSAVSQRIKQLENMFGQPLLVRTVPPRPT). Residues 21–40 (FERAAQKLCITQSAVSQRIK) constitute a DNA-binding region (H-T-H motif).

It belongs to the LysR transcriptional regulatory family. As to quaternary structure, homodimer.

Functionally, controls the transcription of genes involved in arginine and lysine metabolism. The polypeptide is HTH-type transcriptional regulator ArgP (Enterobacter sp. (strain 638)).